A 606-amino-acid chain; its full sequence is Mitogen-activated protein kinase kinase kinase 7 (606 aa).

The interaction with MAPK8IP1 stretch occupies residues 1-300 (MSTASAASSS…FPGADEPLQY (300 aa)). The Protein kinase domain occupies 36 to 291 (IEVEEVVGRG…KIMTHLMRYF (256 aa)). ATP is bound by residues 42–50 (VGRGAFGVV) and lysine 63. Residue lysine 72 forms a Glycyl lysine isopeptide (Lys-Gly) (interchain with G-Cter in ubiquitin) linkage. Aspartate 156 acts as the Proton acceptor in catalysis. A Glycyl lysine isopeptide (Lys-Gly) (interchain with G-Cter in ubiquitin) cross-link involves residue lysine 158. A (Microbial infection) O-acetylthreonine; by Yersinia YopJ; alternate mark is found at threonine 184 and threonine 187. Phosphothreonine; by autocatalysis; alternate occurs at positions 184 and 187. Serine 192 is subject to Phosphoserine; by autocatalysis. Residue lysine 209 forms a Glycyl lysine isopeptide (Lys-Gly) (interchain with G-Cter in ubiquitin) linkage. Residues 301-338 (PCQYSDEGQSNSATSTGSFMDIASTNTSNKSDTNMEQV) form a disordered region. The span at 306 to 338 (DEGQSNSATSTGSFMDIASTNTSNKSDTNMEQV) shows a compositional bias: polar residues. Threonine 341 is modified ((Microbial infection) O-acetylthreonine; by Yersinia YopJ; alternate). Residues 354 to 391 (KNQAKQQSESGRLSLGASRGSSVESLPPTSEGKRMSAD) form a disordered region. Low complexity predominate over residues 361 to 375 (SESGRLSLGASRGSS). Phosphoserine occurs at positions 367, 389, and 439. The segment covering 443-452 (LTVTGTEPGQ) has biased composition (polar residues). The segment at 443–493 (LTVTGTEPGQVSSRSSSPSVRMITTSGPTSEKPTRSHPWTPDDSTDTNGSD) is disordered. Residues threonine 444, threonine 446, and threonine 448 each carry the (Microbial infection) O-acetylthreonine; by Yersinia YopJ; alternate modification. The segment covering 453-463 (VSSRSSSPSVR) has biased composition (low complexity). Position 455 is a phosphoserine (serine 455). Residues 464 to 473 (MITTSGPTSE) show a composition bias toward polar residues. A (Microbial infection) O-acetylthreonine; by Yersinia YopJ; alternate modification is found at threonine 467.

Belongs to the protein kinase superfamily. STE Ser/Thr protein kinase family. MAP kinase kinase kinase subfamily. As to quaternary structure, can form homodimer. Binds both upstream activators and downstream substrates in multimolecular complexes. Interacts with TAB1/MAP3K7IP1, TAB2/MAP3K7IP2 and TAB3/MAP3K7IP3. Identified in the TRIKA2 complex composed of MAP3K7/TAK1, TAB1/MAP3K7IP1 and TAB2/MAP3K7IP2. Interacts with PPM1L and PPM1B/PP2CB. Interaction with PP2A and PPP6C leads to its repressed activity. Interacts with TRAF6 and TAB1/MAP3K7IP1; during IL-1 signaling. Interacts with TAOK1 and TAOK2; interaction with TAOK2 interferes with MAP3K7 interaction with IKKA, thus preventing NF-kappa-B activation. Interacts with DYNC2I2 (via WD domains). Interacts with CYLD and RBCK1. Interacts with TGFBR1; induces MAP3K7/TAK1 activation by TRAF6. Interacts with MAPK8IP1 and SMAD6. Interacts with isoform 1 of VRK2. Interacts with DAB2; the interaction is induced by TGF-beta stimulation and may mediate TGF-beta stimulated JNK activation. Interacts with TRIM5. Part of a complex containing ITCH, NDFIP1 and MAP3K7. Interacts with IFIT5; the interaction synergizes the recruitment of IKK to MAP3K7 and enhances IKK phosphorylation. Interacts with PLEKHM1 (via N- and C-terminus). Interacts with TRIM8. Found in a complex with SH3RF1, RAC2, MAP2K7/MKK7, MAPK8IP1/JIP1, MAPK8/JNK1 and MAPK9/JNK2. Interacts with SASH1. Interacts with RIPK1. (Microbial infection) Interacts with herpes simplex virus 2 protein US2; this interaction induces MAP3K7 phosphorylation and subsequent activation. Mg(2+) is required as a cofactor. In terms of processing, association with TAB1/MAP3K7IP1 promotes autophosphorylation at Ser-192 and subsequent activation. Association with TAB2/MAP3K7IP2, itself associated with free unanchored Lys-63 polyubiquitin chain, promotes autophosphorylation and subsequent activation of MAP3K7. Dephosphorylation at Ser-192 by PPM1B/PP2CB and at Thr-187 by PP2A and PPP6C leads to inactivation. 'Lys-48'-linked polyubiquitination at Lys-72 is induced by TNFalpha, and leads to proteasomal degradation. Undergoes 'Lys-48'-linked polyubiquitination catalyzed by ITCH. Requires 'Lys-63'-linked polyubiquitination for autophosphorylation and subsequent activation. 'Lys-63'-linked ubiquitination does not lead to proteasomal degradation. Deubiquitinated by CYLD, a protease that selectively cleaves 'Lys-63'-linked ubiquitin chains. Deubiquitinated by Y.enterocolitica YopP. Deubiquitinated by USP19; leading to negative regulation of TNF-alpha- and IL-1beta-triggered NF-kappa-B activation. Post-translationally, (Microbial infection) Cleaved and inactivated by the proteases 3C of coxsackievirus A16 and human enterovirus D68, allowing the virus to disrupt TRAF6-triggered NF-kappa-B induction. In terms of processing, (Microbial infection) Acetylation of Thr-184 and Thr-187 by Yersinia YopJ prevents phosphorylation and activation, thus blocking the MAPK signaling pathway. Isoform 1A is the most abundant in ovary, skeletal muscle, spleen and blood mononuclear cells. Isoform 1B is highly expressed in brain, kidney and small intestine. Isoform 1C is the major form in prostate. Isoform 1D is the less abundant form.

Its subcellular location is the cytoplasm. It localises to the cell membrane. The enzyme catalyses L-seryl-[protein] + ATP = O-phospho-L-seryl-[protein] + ADP + H(+). The catalysed reaction is L-threonyl-[protein] + ATP = O-phospho-L-threonyl-[protein] + ADP + H(+). Activated by pro-inflammatory cytokines and in response to physical and chemical stresses, including osmotic stress, oxidative stress, arsenic and ultraviolet light irradiation. Activated by 'Lys-63'-linked polyubiquitination and by autophosphorylation. Association with TAB1/MAP3K7IP1 and TAB2/MAP3K7IP2 promotes activation through autophosphorylation, whereas PPM1B/PP2CB, PP2A and PPP6C dephosphorylation leads to inactivation. Ceramides are also able to activate MAP3K7/TAK1. Functionally, serine/threonine kinase which acts as an essential component of the MAP kinase signal transduction pathway. Plays an important role in the cascades of cellular responses evoked by changes in the environment. Mediates signal transduction of TRAF6, various cytokines including interleukin-1 (IL-1), transforming growth factor-beta (TGFB), TGFB-related factors like BMP2 and BMP4, toll-like receptors (TLR), tumor necrosis factor receptor CD40 and B-cell receptor (BCR). Once activated, acts as an upstream activator of the MKK/JNK signal transduction cascade and the p38 MAPK signal transduction cascade through the phosphorylation and activation of several MAP kinase kinases like MAP2K1/MEK1, MAP2K3/MKK3, MAP2K6/MKK6 and MAP2K7/MKK7. These MAP2Ks in turn activate p38 MAPKs and c-jun N-terminal kinases (JNKs); both p38 MAPK and JNK pathways control the transcription factors activator protein-1 (AP-1). Independently of MAP2Ks and p38 MAPKs, acts as a key activator of NF-kappa-B by promoting activation of the I-kappa-B-kinase (IKK) core complex. Mechanistically, recruited to polyubiquitin chains of RIPK2 and IKBKG/NEMO via TAB2/MAP3K7IP2 and TAB3/MAP3K7IP3, and catalyzes phosphorylation and activation of IKBKB/IKKB component of the IKK complex, leading to NF-kappa-B activation. In osmotic stress signaling, plays a major role in the activation of MAPK8/JNK1, but not that of NF-kappa-B. Promotes TRIM5 capsid-specific restriction activity. Phosphorylates RIPK1 at 'Ser-321' which positively regulates RIPK1 interaction with RIPK3 to promote necroptosis but negatively regulates RIPK1 kinase activity and its interaction with FADD to mediate apoptosis. Phosphorylates STING1 in response to cGAMP-activation, promoting association between STEEP1 and STING1 and STING1 translocation to COPII vesicles. This is Mitogen-activated protein kinase kinase kinase 7 from Homo sapiens (Human).